We begin with the raw amino-acid sequence, 206 residues long: MPKVPVYNMEGAQVGEIELKDEIFGAPVNKAVLYEVSLMYLANQRRGTHDTKTRGEVSGGGRKPWRQKGTGRARHGSIRSPLWRKGGIVFGPHPRDYSYSVPKKVRRAALKSALSDKVNENNLIVVDSLTFAAPKTKEMIRVLNNLKVNGKTLIVTAGYDEIVEKSARNIPGVSVMTAPSLNALSLLNHDKLIMTRDAVLKVEEVF.

Residues 47-77 (GTHDTKTRGEVSGGGRKPWRQKGTGRARHGS) form a disordered region. Residues 63–77 (KPWRQKGTGRARHGS) show a composition bias toward basic residues.

The protein belongs to the universal ribosomal protein uL4 family. Part of the 50S ribosomal subunit.

Its function is as follows. One of the primary rRNA binding proteins, this protein initially binds near the 5'-end of the 23S rRNA. It is important during the early stages of 50S assembly. It makes multiple contacts with different domains of the 23S rRNA in the assembled 50S subunit and ribosome. Forms part of the polypeptide exit tunnel. The sequence is that of Large ribosomal subunit protein uL4 from Carboxydothermus hydrogenoformans (strain ATCC BAA-161 / DSM 6008 / Z-2901).